The sequence spans 104 residues: Large ribosomal subunit protein uL24 (104 aa).

Belongs to the universal ribosomal protein uL24 family. Part of the 50S ribosomal subunit.

One of two assembly initiator proteins, it binds directly to the 5'-end of the 23S rRNA, where it nucleates assembly of the 50S subunit. Its function is as follows. One of the proteins that surrounds the polypeptide exit tunnel on the outside of the subunit. The polypeptide is Large ribosomal subunit protein uL24 (Nitrobacter hamburgensis (strain DSM 10229 / NCIMB 13809 / X14)).